The primary structure comprises 323 residues: tRNA U34 carboxymethyltransferase (323 aa).

Residues lysine 91, tryptophan 105, lysine 110, glycine 130, aspartate 152–threonine 154, isoleucine 181–glutamate 182, methionine 196, tyrosine 200, and arginine 315 contribute to the carboxy-S-adenosyl-L-methionine site.

Belongs to the class I-like SAM-binding methyltransferase superfamily. CmoB family. In terms of assembly, homotetramer.

It catalyses the reaction carboxy-S-adenosyl-L-methionine + 5-hydroxyuridine(34) in tRNA = 5-carboxymethoxyuridine(34) in tRNA + S-adenosyl-L-homocysteine + H(+). Its function is as follows. Catalyzes carboxymethyl transfer from carboxy-S-adenosyl-L-methionine (Cx-SAM) to 5-hydroxyuridine (ho5U) to form 5-carboxymethoxyuridine (cmo5U) at position 34 in tRNAs. In Shigella flexneri serotype 5b (strain 8401), this protein is tRNA U34 carboxymethyltransferase.